Reading from the N-terminus, the 701-residue chain is MMIPSGECTYAGRKRRKPIQKRRLTMGAEKSNPSKRHRDRLNTELDHLASLLPFSPDIISKLDKLSVLRLSVSYLRVKSFFQALQETCVWSAPALSPEEHSYRGFPVQEGRLLLESLNGFALVVSAEGMIFYASATIVDYLGFHQTDVMHQNIYDYIHVDDRQDFCRQLHWAMDPPQVVFGQSPHADTDNTVLGKLLRAQEGGKGLPSEYSAFLTRCFICRVRCLLDSTSGFLTMQFQGKLKFLFGQKKKTPSGTALPPRLSLFCIVAPVLPSVTEMKMKSTFLKAKHRADIVVTMDSRAKAVTSLCESELHPKLNYLAGKSNGENGISLFRGQTDRSHWARALARSSCLCLRGGPDLLDPKGTSGDREEEDQKHILRRSPGAWGQREMHKYSYGLETPVHLRHLNWSTEQRSQESTTKLTRQPSKNEPSTCLVPHGSCVPYPGSQGMLSASNMASFRDSLDHPTGAYCSQMNRPLSDIHQGQVDPSTCHISQGSLGSRIPLTGMQRFTARGFSTEDAKLPSLPVTIGTPCNPVLSLDVPIKMENESGSQDIVEASTTSCLWLGTSDMARGHLVGFPARMHLKTEPDYRQQACTPHLGHGMLGTNPYSRDTVGSCREHAPLYSAHCTCLDPEPPHHLFMCSHSESQHPSLDQDCRAPIVKREPLDSPSWAAPGQVTVPRMFPKSASKTVIPSKGSDGIFLP.

Positions 25-78 (TMGAEKSNPSKRHRDRLNTELDHLASLLPFSPDIISKLDKLSVLRLSVSYLRVK) constitute a bHLH domain. The PAS domain maps to 106–176 (PVQEGRLLLE…RQLHWAMDPP (71 aa)). The span at 409-430 (TEQRSQESTTKLTRQPSKNEPS) shows a compositional bias: polar residues. Residues 409–432 (TEQRSQESTTKLTRQPSKNEPSTC) form a disordered region. The tract at residues 555-701 (ASTTSCLWLG…SKGSDGIFLP (147 aa)) is needed for transcriptional repression. Glycyl lysine isopeptide (Lys-Gly) (interchain with G-Cter in SUMO2) cross-links involve residues Lys583 and Lys660.

Interacts with ARNT, ANKRA2, HDAC4 and HDAC5. Interacts with ARNT; forms a heterodimer with ARNT.

It localises to the cytoplasm. The protein resides in the nucleus. In terms of biological role, mediates dioxin toxicity and is involved in regulation of cell growth and differentiation. Represses the transcription activity of AHR by competing with this transcription factor for heterodimer formation with the ARNT and subsequently binding to the xenobiotic response element (XRE) sequence present in the promoter regulatory region of variety of genes. Represses CYP1A1 by binding the XRE sequence and recruiting ANKRA2, HDAC4 and/or HDAC5. Autoregulates its expression by associating with its own XRE site. This Mus musculus (Mouse) protein is Aryl hydrocarbon receptor repressor (Ahrr).